We begin with the raw amino-acid sequence, 493 residues long: 3-octaprenyl-4-hydroxybenzoate carboxy-lyase (493 aa).

N172 serves as a coordination point for Mn(2+). Residues 175–177, 189–191, and 194–195 each bind prenylated FMN; these read IYR, RWL, and RG. E238 is a Mn(2+) binding site. Catalysis depends on D287, which acts as the Proton donor.

It belongs to the UbiD family. Homohexamer. Prenylated FMN is required as a cofactor. Mn(2+) serves as cofactor.

The protein resides in the cell membrane. The catalysed reaction is a 4-hydroxy-3-(all-trans-polyprenyl)benzoate + H(+) = a 2-(all-trans-polyprenyl)phenol + CO2. The protein operates within cofactor biosynthesis; ubiquinone biosynthesis. Catalyzes the decarboxylation of 3-octaprenyl-4-hydroxy benzoate to 2-octaprenylphenol, an intermediate step in ubiquinone biosynthesis. The chain is 3-octaprenyl-4-hydroxybenzoate carboxy-lyase from Shewanella loihica (strain ATCC BAA-1088 / PV-4).